Here is a 428-residue protein sequence, read N- to C-terminus: Immunoglobulin superfamily containing leucine-rich repeat protein (428 aa).

Positions 1 to 18 (MRALCLLCWAVLLNLVRA) are cleaved as a signal peptide. In terms of domain architecture, LRRNT spans 19–50 (CPEPCDCGEKYGFQIADCAYRDLEGVPPGFPA). Asn51 carries an N-linked (GlcNAc...) asparagine glycan. LRR repeat units lie at residues 51–72 (NVTTLSLSANRLPGLPEGAFRE), 75–98 (LLQSLWLAHNEIRSVAIGALAPLS), 99–122 (HLKSLDLSHNLLSEFAWSDLHNLS), 123–144 (ALQLLKMDSNELAFIPRDAFSS), and 147–168 (ALRSLQLNHNRLHALAEGTFAP). The LRRCT domain occupies 180–231 (NPFDCTCGIVWFKTWALASAVSIPEQDNIACTTPHVLKGIPLGRLPPLPCSA). One can recognise an Ig-like domain in the interval 232 to 343 (PSVQLSYQPS…GSAESSVNVA (112 aa)). A disulfide bridge connects residues Cys257 and Cys327. Residue Asn309 is glycosylated (N-linked (GlcNAc...) asparagine).

As to expression, detected in thyroid, heart, retina and spinal cord.

Its subcellular location is the secreted. The polypeptide is Immunoglobulin superfamily containing leucine-rich repeat protein (Islr) (Mus musculus (Mouse)).